The chain runs to 148 residues: MKYQKLENQEANWKWIYLIRKHREGENITRYEERSLQEAKAQELLESQNYPEKIEEWIKNHLSPALPIKLDQAIRARRKRFFNGEKQHTKKKSIDLEYAVWLRLSKYSRKMKMTLSETITYMIDERESKAQFENQMAAMKTSLKNLLK.

The protein belongs to the MatP family. Homodimer.

It is found in the cytoplasm. Functionally, required for spatial organization of the terminus region of the chromosome (Ter macrodomain) during the cell cycle. Prevents early segregation of duplicated Ter macrodomains during cell division. Binds specifically to matS, which is a 13 bp signature motif repeated within the Ter macrodomain. In Haemophilus influenzae (strain ATCC 51907 / DSM 11121 / KW20 / Rd), this protein is Macrodomain Ter protein.